The sequence spans 842 residues: DNA gyrase subunit A (842 aa).

The Topo IIA-type catalytic domain maps to 42–511 (LPEVRDGLKP…ADGEVSDEDL (470 aa)). Y130 (O-(5'-phospho-DNA)-tyrosine intermediate) is an active-site residue. Positions 538–544 (QKRGGKG) match the GyrA-box motif. Residues 822 to 842 (EDEAAESISESDADTAESPEA) are disordered.

It belongs to the type II topoisomerase GyrA/ParC subunit family. As to quaternary structure, heterotetramer, composed of two GyrA and two GyrB chains. In the heterotetramer, GyrA contains the active site tyrosine that forms a transient covalent intermediate with DNA, while GyrB binds cofactors and catalyzes ATP hydrolysis.

The protein localises to the cytoplasm. It carries out the reaction ATP-dependent breakage, passage and rejoining of double-stranded DNA.. Inhibited by 4-quinoline drugs (nalidixic acid, ciprofloxacin, ofloxacin), although it is much less sensitive than the corresponding enzyme from E.coli. Its function is as follows. A type II topoisomerase that negatively supercoils closed circular double-stranded (ds) DNA in an ATP-dependent manner to modulate DNA topology and maintain chromosomes in an underwound state. Negative supercoiling favors strand separation, and DNA replication, transcription, recombination and repair, all of which involve strand separation. Also able to catalyze the interconversion of other topological isomers of dsDNA rings, including catenanes and knotted rings. Type II topoisomerases break and join 2 DNA strands simultaneously in an ATP-dependent manner. The polypeptide is DNA gyrase subunit A (Mycolicibacterium smegmatis (strain ATCC 700084 / mc(2)155) (Mycobacterium smegmatis)).